The sequence spans 541 residues: Copper transport protein CutJ (541 aa).

An N-terminal signal peptide occupies residues 1 to 25; the sequence is MKRNRWWIILLLFLVFLPKTSFAHA. Residues His-24 and His-110 each coordinate Cu cation. 8 consecutive transmembrane segments (helical) span residues 146 to 166, 180 to 200, 228 to 248, 262 to 282, 293 to 313, 335 to 355, 370 to 390, and 407 to 427; these read AILY…LFWY, ILTG…PIQT, SIWI…IPAI, PLIF…AAVV, FLHL…VLLL, WALT…FFII, LLVK…HFLL, and WAIG…PSPP.

This sequence in the N-terminal section; belongs to the CopC family. The protein in the C-terminal section; belongs to the CopD family.

It is found in the cell membrane. Involved in uptake of extracellular oxidized copper under copper-limiting conditions. The sequence is that of Copper transport protein CutJ from Bacillus subtilis (strain 168).